A 255-amino-acid chain; its full sequence is Octanoyltransferase (255 aa).

The segment at 1–27 (MPPASDAHAAPDAAASTSASPQSCAAP) is disordered. The BPL/LPL catalytic domain occupies 59-240 (PDTGDEIWVV…RLIANLDGAT (182 aa)). Substrate is bound by residues 99 to 106 (RGGQITYH), 171 to 173 (ALG), and 184 to 186 (GLS). Residue Cys-202 is the Acyl-thioester intermediate of the active site.

The protein belongs to the LipB family.

The protein localises to the cytoplasm. The catalysed reaction is octanoyl-[ACP] + L-lysyl-[protein] = N(6)-octanoyl-L-lysyl-[protein] + holo-[ACP] + H(+). It participates in protein modification; protein lipoylation via endogenous pathway; protein N(6)-(lipoyl)lysine from octanoyl-[acyl-carrier-protein]: step 1/2. Its function is as follows. Catalyzes the transfer of endogenously produced octanoic acid from octanoyl-acyl-carrier-protein onto the lipoyl domains of lipoate-dependent enzymes. Lipoyl-ACP can also act as a substrate although octanoyl-ACP is likely to be the physiological substrate. The protein is Octanoyltransferase of Burkholderia thailandensis (strain ATCC 700388 / DSM 13276 / CCUG 48851 / CIP 106301 / E264).